A 158-amino-acid chain; its full sequence is UPF0758 protein YkfG (158 aa).

An MPN domain is found at 36 to 158; that stretch reads AFTSTHAVRE…IYSFAEHGLL (123 aa). His107, His109, and Asp120 together coordinate Zn(2+). Residues 107-120 carry the JAMM motif motif; the sequence is HNHPSGETTPSQAD.

Belongs to the UPF0758 family.

This Escherichia coli (strain K12) protein is UPF0758 protein YkfG (ykfG).